The sequence spans 1024 residues: Nardilysin-like (1024 aa).

Residues 41–103 (PDIYPEGSVP…DEVKGKGDHQ (63 aa)) form a disordered region. Acidic residues predominate over residues 52–95 (QIDEDDEDGEEEDSDGSSEDDDDDEDDEEDGEGDEEDEDEDEDE). Zn(2+) is bound at residue histidine 129. The active-site Proton acceptor is the glutamate 132. Zn(2+) is bound at residue histidine 133. Glutamate 203 is an active-site residue. Glutamate 210 lines the Zn(2+) pocket.

It belongs to the peptidase M16 family. The cofactor is Zn(2+).

The catalysed reaction is Hydrolysis of polypeptides, preferably at -Xaa-|-Arg-Lys-, and less commonly at -Arg-|-Arg-Xaa-, in which Xaa is not Arg or Lys.. Functionally, cleaves peptide substrates on the N-terminus of arginine residues in dibasic pairs. This is Nardilysin-like from Arabidopsis thaliana (Mouse-ear cress).